The following is a 336-amino-acid chain: MNKADYKGVWVFAEQRDGELQKVSLELLGKGKEMAEKLGVELTAVLLGHNTEKMSKDLLSHGADKVLAADNELLAHFSTDGYAKVICDLVNERKPEILFIGATFIGRDLGPRIAARLSTGLTADCTSLDIDVENRDLLATRPAFGGNLIATIVCSDHRPQMATVRPGVFEKLPVNDANVSDDKIEKVAIKLTASDIRTKVSKVVKLAKDIADIGEAKVLVAGGRGVGSKENFEKLEELASLLGGTIAASRAAIEKEWVDKDLQVGQTGKTVRPTLYIACGISGAIQHLAGMQDSDYIIAINKDVEAPIMKVADLAIVGDVNKVVPELIAQVKAANN.

275–303 lines the FAD pocket; sequence LYIACGISGAIQHLAGMQDSDYIIAINKD.

This sequence belongs to the ETF alpha-subunit/FixB family. Heterodimer of an alpha and a beta subunit. Requires FAD as cofactor.

In terms of biological role, the electron transfer flavoprotein serves as a specific electron acceptor for other dehydrogenases. It transfers the electrons to the main respiratory chain via ETF-ubiquinone oxidoreductase (ETF dehydrogenase). This is Electron transfer flavoprotein subunit alpha (etfA) from Clostridium acetobutylicum (strain ATCC 824 / DSM 792 / JCM 1419 / IAM 19013 / LMG 5710 / NBRC 13948 / NRRL B-527 / VKM B-1787 / 2291 / W).